A 1088-amino-acid polypeptide reads, in one-letter code: MGKYNLILSEYLSFIYNSQSAVQIPIYYSSNSELENRCIEFHSKCLENSKNGLSLKKLFTEYSDVIENATLLSILSYSYDKYNAVERKLVKYAKGKPLEADLTVNELDYENNKITSELFPTAEEYTDSLMDPAILTSLSSNLNAVMFWLEKHENDVAEKLKIYKRRLDLFTIVASTVNKYGVPRHNAKYRYDYEVMKDKPYYLVTWANSSIEMLMSVFSHEDYLIARELIVLSYSNRSTLAKLVSSPMSILVALVDINGTFITNEELELEFSNKYVRAIVPDQTFDELKQMIDNMRKAGLTDIPKMIQDWLVDCSIEKFPLMAKIYSWSFHVGFRKQKMLDAALDQLKTEYTEDVDDEMYREYTMLIRDEVVKMLEEPVKHDDHLLQDSELAGLLSMSSASNGESRQLKFGRKTIFSTKKNMHVMDDMANGRYTPGIIPPVNVDKPIPLGRRDVPGRRTRIIFILPYEYFIAQHAVVEKMLIYAKHTREYAEFYSQSNQLLSYGDVTRFLSNNAMVLYTDVSQWDSSQHNTQPFRKGIIMGLDMLANMTNDARVIQTLNLYKQTQINLMDSYVQIPDGNIIKKIQYGAVASGEKQTKAANSIANLALIKTVLSRISNKHSFVTKIIRVDGDDNYAVLQFNTEVTKQMVQDVSNDVRETYARMNAKVKALVSTVGIEIAKRYIAGGKIFFRAGINLLNNEKRGQSTQWDQAAVLYSNYIVNRLRGFETDREFILTKIMQMTSVAITGSLRLFPSERVLTTNSTFKVFDSEDFIIEYGTTDDEVYIQRAFMSLSSQKSGIADEIAASSTFKNYVSKLSEQLLSSKNNIVSRGIALTEKAKLNSYAPISLEKRRAQISALLTMLQKPVTFKSSKITINDILRDIKPFFTVSEAYLPIQYQKFMPTLPDNVQYIIQCIGSRTYQIEDDGSKSAISRLISKYSVYKPSIEELYKVISLHENEIQLYLISLGIPKIDADTYVGSKIYSQDKYRILESYVYNLMSINYGCYQLFDFNSPDLEKLIRIPFKGKIPAVTFILHLYAKLEVINYAIKNGSWISLFCNYPKSEMIKLWKKMWNITSLRSPYTNANFFQD.

The 187-residue stretch at 501–687 (LSYGDVTRFL…AKRYIAGGKI (187 aa)) folds into the RdRp catalytic domain.

Belongs to the reoviridae RNA-directed RNA polymerase family. As to quaternary structure, interacts with VP3 (Potential). Interacts with VP2; this interaction activates VP1. Interacts with NSP5; this interaction is probably necessary for the formation of functional virus factories. Interacts with NSP2; this interaction is weak. Mg(2+) serves as cofactor.

The protein resides in the virion. The enzyme catalyses RNA(n) + a ribonucleoside 5'-triphosphate = RNA(n+1) + diphosphate. Functionally, RNA-directed RNA polymerase that is involved in both transcription and genome replication. Together with VP3 capping enzyme, forms an enzyme complex positioned near the channels situated at each of the five-fold vertices of the core. Following infection, the outermost layer of the virus is lost, leaving a double-layered particle (DLP) made up of the core and VP6 shell. VP1 then catalyzes the transcription of fully conservative plus-strand genomic RNAs that are extruded through the DLP's channels into the cytoplasm where they function as mRNAs for translation of viral proteins. One copy of each of the viral (+)RNAs is also recruited during core assembly, together with newly synthesized polymerase complexes and VP2. The polymerase of these novo-formed particles catalyzes the synthesis of complementary minus-strands leading to dsRNA formation. To do so, the polymerase specifically recognizes and binds 4 bases 5'-UGUG-3' in the conserved 3'-sequence of plus-strand RNA templates. VP2 presumably activates the autoinhibited VP1-RNA complex to coordinate packaging and genome replication. Once dsRNA synthesis is complete, the polymerase switches to the transcriptional mode, thus providing secondary transcription. In Homo sapiens (Human), this protein is RNA-directed RNA polymerase.